A 414-amino-acid polypeptide reads, in one-letter code: Enolase (414 aa).

Gln-162 provides a ligand contact to (2R)-2-phosphoglycerate. Residue Glu-204 is the Proton donor of the active site. Mg(2+) is bound by residues Asp-239, Glu-280, and Asp-307. Residues Lys-332, Arg-361, Ser-362, and Lys-383 each coordinate (2R)-2-phosphoglycerate. Catalysis depends on Lys-332, which acts as the Proton acceptor.

The protein belongs to the enolase family. Requires Mg(2+) as cofactor.

The protein localises to the cytoplasm. Its subcellular location is the secreted. It localises to the cell surface. The catalysed reaction is (2R)-2-phosphoglycerate = phosphoenolpyruvate + H2O. It participates in carbohydrate degradation; glycolysis; pyruvate from D-glyceraldehyde 3-phosphate: step 4/5. In terms of biological role, catalyzes the reversible conversion of 2-phosphoglycerate (2-PG) into phosphoenolpyruvate (PEP). It is essential for the degradation of carbohydrates via glycolysis. In Campylobacter jejuni subsp. doylei (strain ATCC BAA-1458 / RM4099 / 269.97), this protein is Enolase.